The chain runs to 858 residues: Protein 4.1 (858 aa).

Positions 1–125 (MTTEKSLAAE…KEIELGNSLD (125 aa)) are disordered. Phosphoserine is present on Ser14. The span at 31-50 (QQETQLEEASQAAAAEGSDQ) shows a compositional bias: low complexity. Phosphothreonine is present on Thr62. Basic and acidic residues predominate over residues 63-77 (PTHEDLTKNKERTSE). The span at 78-89 (SRGLSRLLSSFL) shows a compositional bias: low complexity. Phosphoserine occurs at positions 86, 87, 97, 106, 123, 151, 153, and 154. Positions 103–119 (EVESEKEKGEGGQKEIE) are enriched in basic and acidic residues. A disordered region spans residues 155–208 (IETQPAQEEHREDPDSETKEGEGIEECSGTEVKEDPESRAEREPEASQKPVRRH). Composition is skewed to basic and acidic residues over residues 161 to 176 (QEEH…KEGE) and 185 to 200 (EVKE…EPEA). Phosphoserine is present on Ser192. The region spanning 211–492 (MHCKVSLLDD…EHHTFFRLTS (282 aa)) is the FERM domain. Position 223 is a phosphotyrosine (Tyr223). The residue at position 379 (Thr379) is a Phosphothreonine. The tract at residues 495-608 (TIPKSKFLAL…PAEPEPTEAW (114 aa)) is hydrophilic. A disordered region spans residues 518–636 (TRQASALIDR…TQKLAGKGED (119 aa)). A phosphoserine mark is found at Ser522, Ser541, Ser543, and Ser556. Basic and acidic residues-rich tracts occupy residues 581–595 (TPKE…RGEE) and 606–615 (EAWKVEKTHT). The segment at 609-707 (KVEKTHTEVT…WDKRLSTHSP (99 aa)) is spectrin--actin-binding. Over residues 616–629 (EVTVPTSNGDQTQK) the composition is skewed to polar residues. Tyr654 bears the Phosphotyrosine mark. A phosphoserine mark is found at Ser658, Ser668, Ser678, Ser703, and Ser706. The segment at 710–858 (TLNINGQVPT…VHQETEISEE (149 aa)) is C-terminal (CTD). A phosphothreonine mark is found at Thr730 and Thr853.

In terms of assembly, binds with a high affinity to glycophorin and with lower affinity to band III protein. Associates with the nuclear mitotic apparatus. Binds calmodulin, CPAP and DLG1. Also found to associate with contractile apparatus and tight junctions. Interacts with NUMA1; this interaction is negatively regulated by CDK1 during metaphase and promotes anaphase-specific localization of NUMA1 in symmetrically dividing cells. Interacts with ATP2B1; regulates small intestinal calcium absorption through regulation of membrane expression of ATP2B1. In terms of processing, O-glycosylated; contains N-acetylglucosamine side chains in the C-terminal domain. Phosphorylated at multiple sites by different protein kinases and each phosphorylation event selectively modulates the protein's functions. Post-translationally, phosphorylation on Tyr-654 reduces the ability of 4.1 to promote the assembly of the spectrin/actin/4.1 ternary complex.

The protein resides in the nucleus. It is found in the cytoplasm. The protein localises to the cytoskeleton. Its subcellular location is the cell cortex. Protein 4.1 is a major structural element of the erythrocyte membrane skeleton. It plays a key role in regulating membrane physical properties of mechanical stability and deformability by stabilizing spectrin-actin interaction. Recruits DLG1 to membranes. Required for dynein-dynactin complex and NUMA1 recruitment at the mitotic cell cortex during anaphase. This Mus musculus (Mouse) protein is Protein 4.1.